Here is a 394-residue protein sequence, read N- to C-terminus: Protein-glutamate methylesterase/protein-glutamine glutaminase of group 2 operon (394 aa).

The region spanning 21 to 139 (RVMVVDDSAV…ELTGADTFKR (119 aa)) is the Response regulatory domain. The residue at position 72 (D72) is a 4-aspartylphosphate. The disordered stretch occupies residues 148-201 (LGAAARRSGPRREGTAAARPPGAAAQPTSGYTLPSPVRAKPETGPLTVRPLPPD). The span at 162–172 (TAAARPPGAAA) shows a compositional bias: low complexity. In terms of domain architecture, CheB-type methylesterase spans 200–382 (PDGRPDVIAI…SAILPLKEIG (183 aa)). Residues S212, H238, and D334 contribute to the active site.

The protein belongs to the CheB family. In terms of processing, phosphorylated by CheA. Phosphorylation of the N-terminal regulatory domain activates the methylesterase activity.

It localises to the cytoplasm. The enzyme catalyses [protein]-L-glutamate 5-O-methyl ester + H2O = L-glutamyl-[protein] + methanol + H(+). The catalysed reaction is L-glutaminyl-[protein] + H2O = L-glutamyl-[protein] + NH4(+). Its function is as follows. Involved in chemotaxis. Part of a chemotaxis signal transduction system that modulates chemotaxis in response to various stimuli. Catalyzes the demethylation of specific methylglutamate residues introduced into the chemoreceptors (methyl-accepting chemotaxis proteins or MCP) by CheR. Also mediates the irreversible deamidation of specific glutamine residues to glutamic acid. This Rhodospirillum centenum (strain ATCC 51521 / SW) protein is Protein-glutamate methylesterase/protein-glutamine glutaminase of group 2 operon.